Here is a 130-residue protein sequence, read N- to C-terminus: Glycine cleavage system H protein (130 aa).

The Lipoyl-binding domain maps to 24 to 106 (TATVGITDFA…YGDGWMFKVK (83 aa)). K65 bears the N6-lipoyllysine mark.

The protein belongs to the GcvH family. The glycine cleavage system is composed of four proteins: P, T, L and H. The cofactor is (R)-lipoate.

Its function is as follows. The glycine cleavage system catalyzes the degradation of glycine. The H protein shuttles the methylamine group of glycine from the P protein to the T protein. This Marinobacter nauticus (strain ATCC 700491 / DSM 11845 / VT8) (Marinobacter aquaeolei) protein is Glycine cleavage system H protein.